Reading from the N-terminus, the 579-residue chain is Golvesin (579 aa).

A required for targeting to the plasma membrane region spans residues 1 to 75 (MTSVNEHSLL…NNNNNNNNNN (75 aa)). The tract at residues 1–79 (MTSVNEHSLL…NNNNNNSNTG (79 aa)) is disordered. Residues 1 to 94 (MTSVNEHSLL…KKKKWNFRKK (94 aa)) are Lumenal-facing. Residues 11 to 77 (INNNENNDNN…NNNNNNNNSN (67 aa)) are compositionally biased toward low complexity. Residues 95–115 (ILPMIVILIITAIVVCLVVFS) traverse the membrane as a helical; Signal-anchor for type III membrane protein segment. The segment at 95–118 (ILPMIVILIITAIVVCLVVFSLPF) is required for membrane targeting. Residues 116-578 (LPFDSSNTIY…SNDFVIAESP (463 aa)) are Cytoplasmic-facing. Positions 559–579 (WPSSKGIPGFSNDFVIAESPE) are required for transfer to endosomes and contractile vacuoles; the protein is trapped in the Golgi.

The protein resides in the contractile vacuole membrane. It is found in the endosome membrane. It localises to the golgi apparatus membrane. This is Golvesin (gol) from Dictyostelium discoideum (Social amoeba).